The primary structure comprises 133 residues: DNA-binding protein inhibitor ID-2-A (133 aa).

The bHLH domain occupies 23–75; sequence ARSKTPVDDPMSLLYNMNDCYSKLKELVPSIPQNKKVSKMEILQHVIDYILDL. The short motif at 106–115 is the Nuclear export signal element; sequence LNTDISILSL.

As to quaternary structure, heterodimer with other HLH proteins. In the embryo, expressed in a range of tissues, with primary expression in the developing pronephros; expressed in the pronephric anlage, and by the swimming tadpole stages expressed robustly in the pronephric tubules and weakly in the pronephric duct. Expressed in the secondary heart field. In the developing nervous system, expressed in the neural crest and in the neural folds during neurula stages, and at stage 20 in the neural tube, ventral mesoderm and mid-hindbrain boundary. By early tailbud stages, expressed in the neural tube, somites and branchial arches. In tadpoles (stage 37/38), expressed in the heart, eye, otic vesicle, somites and branchial arches. Also expressed in migrating muscle cells. Expressed at a low level in limbs, with expression decreasing as limbs develop, but expressed at a high level in blastemas (regenerated limbs), where expression is localized primarily to the blastemal epidermis. Widely expressed in adults with highest expression in the spleen, skin, intestine and brain, and at a much lower level in testis and heart.

It is found in the cytoplasm. The protein localises to the nucleus. In terms of biological role, transcriptional regulator (lacking a basic DNA binding domain) which negatively regulates the basic helix-loop-helix (bHLH) transcription factors by forming heterodimers and inhibiting their DNA binding and transcriptional activity. Inhibits the activity of both neurogenic (neurod1/neuroD) and myogenic (myod1/myoD) bHLH factors. May play a role in the regulation of the circadian clock. This chain is DNA-binding protein inhibitor ID-2-A (id2-a), found in Xenopus laevis (African clawed frog).